We begin with the raw amino-acid sequence, 579 residues long: Type IV pilus assembly ATPase PilB (579 aa).

Residue 340–345 participates in ATP binding; sequence GSGKTV. Zn(2+) is bound by residues Cys470, Cys473, Cys507, and Cys510.

Belongs to the GSP E family. As to quaternary structure, interacts with CpiA.

It localises to the cytoplasm. Inhibited by the inhibitory protein CpiA. Its function is as follows. ATPase component of the type IV pilus (T4P). Acts as a molecular motor to provide the energy that is required for biogenesis of the pilus and the extrusion of substrates generated in the cytoplasm. PilB is required for optimal T4P extension and, consequently, efficient natural transformation. May promote processive T4P extension. The polypeptide is Type IV pilus assembly ATPase PilB (Acinetobacter baylyi (strain ATCC 33305 / BD413 / ADP1)).